The sequence spans 971 residues: Isoleucine--tRNA ligase (971 aa).

Positions 64–74 (PYANGHIHIGH) match the 'HIGH' region motif. Glu602 serves as a coordination point for L-isoleucyl-5'-AMP. The 'KMSKS' region signature appears at 643 to 647 (KMSKS). Residue Lys646 coordinates ATP.

This sequence belongs to the class-I aminoacyl-tRNA synthetase family. IleS type 1 subfamily. As to quaternary structure, monomer.

The protein localises to the cytoplasm. It carries out the reaction tRNA(Ile) + L-isoleucine + ATP = L-isoleucyl-tRNA(Ile) + AMP + diphosphate. Catalyzes the attachment of isoleucine to tRNA(Ile). As IleRS can inadvertently accommodate and process structurally similar amino acids such as valine, to avoid such errors it has two additional distinct tRNA(Ile)-dependent editing activities. One activity is designated as 'pretransfer' editing and involves the hydrolysis of activated Val-AMP. The other activity is designated 'posttransfer' editing and involves deacylation of mischarged Val-tRNA(Ile). The sequence is that of Isoleucine--tRNA ligase from Bartonella quintana (strain Toulouse) (Rochalimaea quintana).